Here is a 284-residue protein sequence, read N- to C-terminus: Acetyl-coenzyme A carboxylase carboxyl transferase subunit beta (284 aa).

One can recognise a CoA carboxyltransferase N-terminal domain in the interval G24–R284.

The protein belongs to the AccD/PCCB family. In terms of assembly, acetyl-CoA carboxylase is a heterohexamer composed of biotin carboxyl carrier protein (AccB), biotin carboxylase (AccC) and two subunits each of ACCase subunit alpha (AccA) and ACCase subunit beta (AccD).

It is found in the cytoplasm. It carries out the reaction N(6)-carboxybiotinyl-L-lysyl-[protein] + acetyl-CoA = N(6)-biotinyl-L-lysyl-[protein] + malonyl-CoA. Its pathway is lipid metabolism; malonyl-CoA biosynthesis; malonyl-CoA from acetyl-CoA: step 1/1. Functionally, component of the acetyl coenzyme A carboxylase (ACC) complex. Biotin carboxylase (BC) catalyzes the carboxylation of biotin on its carrier protein (BCCP) and then the CO(2) group is transferred by the transcarboxylase to acetyl-CoA to form malonyl-CoA. The sequence is that of Acetyl-coenzyme A carboxylase carboxyl transferase subunit beta from Flavobacterium psychrophilum (strain ATCC 49511 / DSM 21280 / CIP 103535 / JIP02/86).